A 156-amino-acid polypeptide reads, in one-letter code: Small ribosomal subunit protein uS7 (156 aa).

The protein belongs to the universal ribosomal protein uS7 family. As to quaternary structure, part of the 30S ribosomal subunit. Contacts proteins S9 and S11.

One of the primary rRNA binding proteins, it binds directly to 16S rRNA where it nucleates assembly of the head domain of the 30S subunit. Is located at the subunit interface close to the decoding center, probably blocks exit of the E-site tRNA. This Acaryochloris marina (strain MBIC 11017) protein is Small ribosomal subunit protein uS7.